The primary structure comprises 173 residues: Photosystem I assembly protein Ycf3 (173 aa).

3 TPR repeats span residues 35-68 (AFVY…EEDT), 72-105 (GYIL…NPRL), and 120-153 (GEKE…APNN).

Belongs to the Ycf3 family.

Its subcellular location is the cellular thylakoid membrane. Essential for the assembly of the photosystem I (PSI) complex. May act as a chaperone-like factor to guide the assembly of the PSI subunits. This Nostoc punctiforme (strain ATCC 29133 / PCC 73102) protein is Photosystem I assembly protein Ycf3.